A 969-amino-acid chain; its full sequence is Levansucrase (969 aa).

Positions Met1–Ala52 are cleaved as a signal peptide. Positions Ser89–Thr103 are enriched in low complexity. The tract at residues Ser89–Thr169 is disordered. Residues Val106–Pro116 show a composition bias toward polar residues. Over residues Ser124–Ala166 the composition is skewed to low complexity. Trp286, Asp287, and Ser356 together coordinate sucrose. The Nucleophile role is filled by Asp287. Position 443 (Asp443) interacts with Ca(2+). Sucrose is bound by residues Arg448 and Asp449. The Ca(2+) site is built by Gln473, Asn512, and Asp544. Glu545 serves as a coordination point for sucrose. The active-site Proton donor/acceptor is Glu547. Arg565 lines the sucrose pocket. 2 disordered regions span residues Val746–Arg843 and Ile860–Ser934. The span at Lys747 to Glu758 shows a compositional bias: basic and acidic residues. Polar residues predominate over residues Lys776–Ser789. Over residues Val872–Ser910 the composition is skewed to basic and acidic residues. Residues Thr924 to Ser934 are compositionally biased toward polar residues. A helical transmembrane segment spans residues Ile938–Gly958.

It belongs to the glycosyl hydrolase 68 family.

Its subcellular location is the cell membrane. It localises to the cell surface. It carries out the reaction [6)-beta-D-fructofuranosyl-(2-&gt;](n) alpha-D-glucopyranoside + sucrose = [6)-beta-D-fructofuranosyl-(2-&gt;](n+1) alpha-D-glucopyranoside + D-glucose. With respect to regulation, ca(2+) may play an important structural role and promote stability of levansucrase. Functionally, catalyzes the synthesis of levan, a fructose polymer, by transferring the fructosyl moiety from sucrose to a growing acceptor molecule. Also displays sucrose hydrolase activity. This is Levansucrase from Streptococcus salivarius.